The following is a 490-amino-acid chain: Cytochrome P450 71A25 (490 aa).

The helical transmembrane segment at 1 to 21 threads the bilayer; that stretch reads MMMMIILLWSIIFMTILFLKK. A heme-binding site is contributed by Cys-431.

It belongs to the cytochrome P450 family. It depends on heme as a cofactor.

It is found in the membrane. This Arabidopsis thaliana (Mouse-ear cress) protein is Cytochrome P450 71A25 (CYP71A25).